The sequence spans 161 residues: Endoribonuclease YbeY (161 aa).

Residues H127, H131, and H137 each coordinate Zn(2+).

This sequence belongs to the endoribonuclease YbeY family. It depends on Zn(2+) as a cofactor.

It is found in the cytoplasm. Single strand-specific metallo-endoribonuclease involved in late-stage 70S ribosome quality control and in maturation of the 3' terminus of the 16S rRNA. The chain is Endoribonuclease YbeY from Listeria innocua serovar 6a (strain ATCC BAA-680 / CLIP 11262).